Consider the following 332-residue polypeptide: Tetraacyldisaccharide 4'-kinase (332 aa).

55–62 (GVGGSGKT) provides a ligand contact to ATP.

The protein belongs to the LpxK family.

The enzyme catalyses a lipid A disaccharide + ATP = a lipid IVA + ADP + H(+). The protein operates within glycolipid biosynthesis; lipid IV(A) biosynthesis; lipid IV(A) from (3R)-3-hydroxytetradecanoyl-[acyl-carrier-protein] and UDP-N-acetyl-alpha-D-glucosamine: step 6/6. Functionally, transfers the gamma-phosphate of ATP to the 4'-position of a tetraacyldisaccharide 1-phosphate intermediate (termed DS-1-P) to form tetraacyldisaccharide 1,4'-bis-phosphate (lipid IVA). This is Tetraacyldisaccharide 4'-kinase from Acidithiobacillus ferrooxidans (strain ATCC 53993 / BNL-5-31) (Leptospirillum ferrooxidans (ATCC 53993)).